We begin with the raw amino-acid sequence, 427 residues long: UDP-N-acetyl-D-mannosamine dehydrogenase (427 aa).

Residues Tyr-19, Ile-20, Asp-39, Arg-44, Thr-91, and Thr-130 each coordinate NAD(+). Arg-155, Val-156, Lys-207, Asn-211, Arg-214, His-245, Arg-247, and Gly-258 together coordinate UDP-N-acetyl-alpha-D-mannosaminouronate. Catalysis depends on Lys-207, which acts as the Proton donor/acceptor. Catalysis depends on Cys-261, which acts as the Nucleophile. UDP-N-acetyl-alpha-D-mannosaminouronate contacts are provided by Tyr-318 and Lys-319. Residue Arg-326 participates in NAD(+) binding. Lys-404 lines the UDP-N-acetyl-alpha-D-mannosaminouronate pocket.

Belongs to the UDP-glucose/GDP-mannose dehydrogenase family. Homotetramer; probably dimer of dimers.

It carries out the reaction UDP-N-acetyl-alpha-D-mannosamine + 2 NAD(+) + H2O = UDP-N-acetyl-alpha-D-mannosaminouronate + 2 NADH + 3 H(+). Catalyzes the four-electron oxidation of UDP-N-acetyl-D-mannosamine (UDP-ManNAc), reducing NAD(+) and releasing UDP-N-acetylmannosaminuronic acid (UDP-ManNAcA). This Methanococcus maripaludis (strain C7 / ATCC BAA-1331) protein is UDP-N-acetyl-D-mannosamine dehydrogenase (wecC).